Here is a 57-residue protein sequence, read N- to C-terminus: Sec-independent protein translocase protein TatAy (57 aa).

Residues 1 to 21 (MPIGPGSLAVIAIVALIIFGP) form a helical membrane-spanning segment.

This sequence belongs to the TatA/E family. Forms a complex with TatCy. Two types of complexes exist: one composed of TatAy and TatCy, and another composed only of TatAy. Cytosolic TatA forms large complexes or aggregates.

It is found in the cell membrane. The protein resides in the cytoplasm. The protein localises to the cytosol. Functionally, part of the twin-arginine translocation (Tat) system that transports large folded proteins containing a characteristic twin-arginine motif in their signal peptide across membranes. TatA could form the protein-conducting channel of the Tat system. Required for YwbN secretion. The sequence is that of Sec-independent protein translocase protein TatAy from Bacillus subtilis (strain 168).